An 869-amino-acid polypeptide reads, in one-letter code: Synaptonemal complex protein ZEP1 (869 aa).

Coiled-coil stretches lie at residues 64-298 (TDLE…SGFT), 330-614 (HEEK…SERY), and 641-713 (RAYH…WKVM). Residues 841-869 (GSHPHPANIGELFSEGSLNPYAEDPYAFG) form a disordered region.

In terms of assembly, interacts with CRC1. As to expression, highly expressed in panicles.

It is found in the nucleus. It localises to the chromosome. Its function is as follows. Required for chromosome synapsis and regulates crossover frequency during meiosis. Acts as a transverse filament protein and constitutes the central element of the synaptonemal complex. This Oryza sativa subsp. japonica (Rice) protein is Synaptonemal complex protein ZEP1 (ZEP1).